Reading from the N-terminus, the 628-residue chain is MKLSWKTLLLWSLPIFVIGFFFWQGFLGPTTTDVGSNIASSRMTYGRFLEYLDMGWVKRVDLYENNHTAIVEAVGPELGNRVQRIRVELPASAPELITKLRKANVDLDAHPPKSTSAVWGLLGNLLFPLLLVGGLAFLFRRSNNASGGPGQAMSFGKSKALFQMEAKTGVVFNDVAGVEEAKEEFQEVVTFLKQPESFTAVGAKIPKGVLLVGPPGTGKTLLAKAIAGEASVPFFSISGSEFVEMFVGVGASRVRDLFKKAKDNAPCIVFIDEIDAVGRQRGTGVGGGNDEREQTLNQLLTEMDGFEGNTGVIVIAATNRADILDSALLRPGRFDRQVSVDVPDFKGRLAILEVHAKNKKMEPKVSLETIARRTPGFSGADLANLLNEAAILTARRRKNAMTMSEIDTSIDRVVAGMEGTPLIDSKSKRLIAYHEVGHAIIGSLLEHHDPVQKVTLIPRGQARGLTWFTPSDDQSLISRSQILARIVGALGGRAAEEIIFGDAEVTTGASNDLQQVTSMARQMVTRFGMSKIGPLSLESQGGDPFLGRGMGGGSEYSDEVATNIDKQVREIVSECYAQAKHIIIDNRVVIDRLVDLLIEKETIEGNEFRDIVKEYTAIPEKNYYISQF.

Over 1–7 (MKLSWKT) the chain is Stromal. Residues 8–28 (LLLWSLPIFVIGFFFWQGFLG) form a helical membrane-spanning segment. Residues 29–118 (PTTTDVGSNI…AHPPKSTSAV (90 aa)) are Lumenal-facing. Residues 119–139 (WGLLGNLLFPLLLVGGLAFLF) traverse the membrane as a helical segment. Topologically, residues 140-628 (RRSNNASGGP…PEKNYYISQF (489 aa)) are stromal. 213–220 (GPPGTGKT) contributes to the ATP binding site. His-434 is a Zn(2+) binding site. The active site involves Glu-435. Zn(2+)-binding residues include His-438 and Asp-512.

It in the central section; belongs to the AAA ATPase family. In the C-terminal section; belongs to the peptidase M41 family. In terms of assembly, homohexamer. Zn(2+) serves as cofactor.

It localises to the plastid. It is found in the chloroplast thylakoid membrane. Its function is as follows. Acts as a processive, ATP-dependent zinc metallopeptidase. In Pyropia yezoensis (Susabi-nori), this protein is ATP-dependent zinc metalloprotease FtsH.